The chain runs to 312 residues: MKPQLVNLLLLCCCCLGRHGVAGTWSWSHQREAAALRESLHRHRYLNSFPHENSTAFYGVNQFSYLFPEEFKALYLGSKYAWAPRYPAEGQRPIPNVSLPLRFDWRDKHVVNPVRNQEMCGGCWAFSVVSAIESARAIQGKSLDYLSVQQVIDCSFNNSGCLGGSPLCALRWLNETQLKLVADSQYPFKAVNGQCRHFPQSQAGVSVKDFSAYNFRGQEDEMARALLSFGPLVVIVDAMSWQDYLGGIIQHHCSSGEANHAVLITGFDRTGNTPYWMVRNSWGSSWGVEGYAHVKMGGNVCGIADSVAAVFV.

Positions 1–23 (MKPQLVNLLLLCCCCLGRHGVAG) are cleaved as a signal peptide. The propeptide at 24 to 98 (TWSWSHQREA…EGQRPIPNVS (75 aa)) is activation peptide. N-linked (GlcNAc...) asparagine glycosylation is found at N53 and N96. Cystine bridges form between C120/C161, C154/C195, and C253/C301. C123 is an active-site residue. Residues H260 and N280 contribute to the active site.

Belongs to the peptidase C1 family.

It is found in the lysosome. It catalyses the reaction The recombinant human enzyme hydrolyzes synthetic endopeptidase substrates including Z-Phe-Arg-NHMec and Z-Arg-Arg-NHMec.. In terms of biological role, proteolytic enzyme possibly involved in normal cellular protein degradation and turnover. This chain is Cathepsin O (Ctso), found in Mus musculus (Mouse).